The following is a 513-amino-acid chain: ATP synthase subunit alpha (513 aa).

169–176 (GDRQTGKT) contributes to the ATP binding site.

Belongs to the ATPase alpha/beta chains family. As to quaternary structure, F-type ATPases have 2 components, CF(1) - the catalytic core - and CF(0) - the membrane proton channel. CF(1) has five subunits: alpha(3), beta(3), gamma(1), delta(1), epsilon(1). CF(0) has three main subunits: a(1), b(2) and c(9-12). The alpha and beta chains form an alternating ring which encloses part of the gamma chain. CF(1) is attached to CF(0) by a central stalk formed by the gamma and epsilon chains, while a peripheral stalk is formed by the delta and b chains.

The protein resides in the cell inner membrane. The catalysed reaction is ATP + H2O + 4 H(+)(in) = ADP + phosphate + 5 H(+)(out). Functionally, produces ATP from ADP in the presence of a proton gradient across the membrane. The alpha chain is a regulatory subunit. The chain is ATP synthase subunit alpha from Idiomarina loihiensis (strain ATCC BAA-735 / DSM 15497 / L2-TR).